The following is a 130-amino-acid chain: Small ribosomal subunit protein uS8 (130 aa).

This sequence belongs to the universal ribosomal protein uS8 family. Part of the 30S ribosomal subunit. Contacts proteins S5 and S12.

In terms of biological role, one of the primary rRNA binding proteins, it binds directly to 16S rRNA central domain where it helps coordinate assembly of the platform of the 30S subunit. The protein is Small ribosomal subunit protein uS8 of Vibrio vulnificus (strain CMCP6).